Here is a 3462-residue protein sequence, read N- to C-terminus: DNA-directed RNA polymerase subunit beta'' (3462 aa).

Residues cysteine 263, cysteine 335, cysteine 342, and cysteine 345 each coordinate Zn(2+). The insert-1 stretch occupies residues 541-1085 (KIDDQELSSV…PNKIFSSNLF (545 aa)). An insert-2 region spans residues 1528 to 1585 (PQSANERKQILKKARQKLRLFPLNLNEKKNRFSSVTLDLLRDQTTLHKMQSCGEAESG). An insert-3 region spans residues 1602–1699 (KKITEIFTFC…FSKQMGNRLL (98 aa)). Positions 1938 to 2168 (LKNKMNQSFS…SQASWILETN (231 aa)) are insert-4. The interval 2320–2870 (NLVSGKLNFL…KKKIAKEGAF (551 aa)) is insert-5. Residues 2972 to 3196 (SKSQRGWFHN…IGQLLRYGKE (225 aa)) form an insert-6 region.

Belongs to the RNA polymerase beta' chain family. RpoC2 subfamily. In plastids the minimal PEP RNA polymerase catalytic core is composed of four subunits: alpha, beta, beta', and beta''. When a (nuclear-encoded) sigma factor is associated with the core the holoenzyme is formed, which can initiate transcription. The cofactor is Zn(2+).

Its subcellular location is the plastid. It localises to the chloroplast. The catalysed reaction is RNA(n) + a ribonucleoside 5'-triphosphate = RNA(n+1) + diphosphate. In terms of biological role, DNA-dependent RNA polymerase catalyzes the transcription of DNA into RNA using the four ribonucleoside triphosphates as substrates. This Tupiella akineta (Green alga) protein is DNA-directed RNA polymerase subunit beta''.